Consider the following 152-residue polypeptide: Xanthine-guanine phosphoribosyltransferase (152 aa).

5-phospho-alpha-D-ribose 1-diphosphate is bound by residues 37-38 (RG), Arg-69, and 88-96 (DDLVDTGVT). Arg-69 contacts GMP. Asp-89 contributes to the Mg(2+) binding site. Guanine-binding residues include Asp-92 and Ile-135. Asp-92 and Ile-135 together coordinate xanthine. GMP-binding positions include 92 to 96 (DTGVT) and 134 to 135 (WI).

Belongs to the purine/pyrimidine phosphoribosyltransferase family. XGPT subfamily. In terms of assembly, homotetramer. Requires Mg(2+) as cofactor.

The protein resides in the cell inner membrane. It catalyses the reaction GMP + diphosphate = guanine + 5-phospho-alpha-D-ribose 1-diphosphate. The enzyme catalyses XMP + diphosphate = xanthine + 5-phospho-alpha-D-ribose 1-diphosphate. The catalysed reaction is IMP + diphosphate = hypoxanthine + 5-phospho-alpha-D-ribose 1-diphosphate. Its pathway is purine metabolism; GMP biosynthesis via salvage pathway; GMP from guanine: step 1/1. The protein operates within purine metabolism; XMP biosynthesis via salvage pathway; XMP from xanthine: step 1/1. Purine salvage pathway enzyme that catalyzes the transfer of the ribosyl-5-phosphate group from 5-phospho-alpha-D-ribose 1-diphosphate (PRPP) to the N9 position of the 6-oxopurines guanine and xanthine to form the corresponding ribonucleotides GMP (guanosine 5'-monophosphate) and XMP (xanthosine 5'-monophosphate), with the release of PPi. To a lesser extent, also acts on hypoxanthine. The protein is Xanthine-guanine phosphoribosyltransferase of Sodalis glossinidius (strain morsitans).